Here is a 372-residue protein sequence, read N- to C-terminus: MSIQVQHVTKRFGNFVALDDVSLAFRQGELTALLGPSGCGKTTLLRIIAGLEHADAGTILLNGEDASDRHVRERQVGFVFQHYALFKHMTVFENVAFGLRVKPRAQRPSEAQIRAKVKALLELVQLDWLAERYPPQLSGGQRQRIALARALAVEPRVLLLDEPFGALDAKVRKELRRWLRRLHDDLHVTSLFVTHDQEEALEVADSVVLMNRGQVEQVGSPDAVYNTPATPFVYGFLGNVNLFHGRLEAGEGGSVLHVGETALSVPPGGVDASRADQAVAFVRPHEIDLERYAPGAEGIPVTLRRALTLGAVAQLELERTDSDDIIEVSLPIERFRAQGLREGETLVVRPRAIRVFAQGQGSEHAAAAQAAA.

The ABC transporter domain occupies 3–237 (IQVQHVTKRF…PATPFVYGFL (235 aa)). ATP is bound at residue 35-42 (GPSGCGKT).

This sequence belongs to the ABC transporter superfamily. Sulfate/tungstate importer (TC 3.A.1.6) family. The complex is composed of two ATP-binding proteins (CysA), two transmembrane proteins (CysT and CysW) and a solute-binding protein (CysP).

The protein resides in the cell inner membrane. It catalyses the reaction sulfate(out) + ATP + H2O = sulfate(in) + ADP + phosphate + H(+). The enzyme catalyses thiosulfate(out) + ATP + H2O = thiosulfate(in) + ADP + phosphate + H(+). Part of the ABC transporter complex CysAWTP involved in sulfate/thiosulfate import. Responsible for energy coupling to the transport system. This is Sulfate/thiosulfate import ATP-binding protein CysA from Ralstonia nicotianae (strain ATCC BAA-1114 / GMI1000) (Ralstonia solanacearum).